The primary structure comprises 299 residues: Very long chain fatty acid elongase 5 (299 aa).

N-acetylmethionine is present on methionine 1. The next 7 membrane-spanning stretches (helical) occupy residues 26 to 46 (WFLL…LLIV), 64 to 84 (ILVV…YELV), 112 to 132 (VLWW…FFIL), 139 to 158 (ITVL…WFVM), 168 to 187 (FGAT…YGLS), 205 to 225 (GQLV…IWPC), and 227 to 247 (FPLG…ALFT).

This sequence belongs to the ELO family. ELOVL5 subfamily. As to quaternary structure, interacts with TECR. Highly expressed in lung and brain.

It localises to the endoplasmic reticulum membrane. Its subcellular location is the cell projection. The protein localises to the dendrite. The enzyme catalyses a very-long-chain acyl-CoA + malonyl-CoA + H(+) = a very-long-chain 3-oxoacyl-CoA + CO2 + CoA. The catalysed reaction is (6Z,9Z,12Z,15Z)-octadecatetraenoyl-CoA + malonyl-CoA + H(+) = (8Z,11Z,14Z,17Z)-3-oxoicosatetraenoyl-CoA + CO2 + CoA. It catalyses the reaction (6Z,9Z,12Z)-octadecatrienoyl-CoA + malonyl-CoA + H(+) = (8Z,11Z,14Z)-3-oxoeicosatrienoyl-CoA + CO2 + CoA. It carries out the reaction (5Z,8Z,11Z,14Z,17Z)-eicosapentaenoyl-CoA + malonyl-CoA + H(+) = 3-oxo-(7Z,10Z,13Z,16Z,19Z)-docosapentaenoyl-CoA + CO2 + CoA. The enzyme catalyses (5Z,8Z,11Z,14Z)-eicosatetraenoyl-CoA + malonyl-CoA + H(+) = (7Z,10Z,13Z,16Z)-3-oxodocosatetraenoyl-CoA + CO2 + CoA. The catalysed reaction is (9Z,12Z,15Z)-octadecatrienoyl-CoA + malonyl-CoA + H(+) = (11Z,14Z,17Z)-3-oxoeicosatrienoyl-CoA + CO2 + CoA. It catalyses the reaction (9Z)-hexadecenoyl-CoA + malonyl-CoA + H(+) = 3-oxo-(11Z)-octadecenoyl-CoA + CO2 + CoA. It carries out the reaction (9Z)-octadecenoyl-CoA + malonyl-CoA + H(+) = 3-oxo-(11Z)-eicosenoyl-CoA + CO2 + CoA. The enzyme catalyses (11Z)-octadecenoyl-CoA + malonyl-CoA + H(+) = 3-oxo-(13Z)-eicosenoyl-CoA + CO2 + CoA. The catalysed reaction is (9Z,12Z)-octadecadienoyl-CoA + malonyl-CoA + H(+) = (11Z,14Z)-3-oxoicosa-11,14-dienoyl-CoA + CO2 + CoA. Its pathway is lipid metabolism; polyunsaturated fatty acid biosynthesis. Its function is as follows. Catalyzes the first and rate-limiting reaction of the four reactions that constitute the long-chain fatty acids elongation cycle. This endoplasmic reticulum-bound enzymatic process allows the addition of 2 carbons to the chain of long- and very long-chain fatty acids (VLCFAs) per cycle. Condensing enzyme that acts specifically toward polyunsaturated acyl-CoA with the higher activity toward C18:3(n-6) acyl-CoA. May participate in the production of monounsaturated and of polyunsaturated VLCFAs of different chain lengths that are involved in multiple biological processes as precursors of membrane lipids and lipid mediators. In conditions where the essential linoleic and alpha linoleic fatty acids are lacking it is also involved in the synthesis of Mead acid from oleic acid. The polypeptide is Very long chain fatty acid elongase 5 (Rattus norvegicus (Rat)).